Consider the following 224-residue polypeptide: Lipoprotein-releasing system ATP-binding protein LolD (224 aa).

Residues 5 to 224 (LVLDGLTKAY…VVRLEAGRVV (220 aa)) enclose the ABC transporter domain. 42–49 (APSGAGKS) contributes to the ATP binding site.

This sequence belongs to the ABC transporter superfamily. Lipoprotein translocase (TC 3.A.1.125) family. As to quaternary structure, the complex is composed of two ATP-binding proteins (LolD) and two transmembrane proteins (LolC and LolE).

It localises to the cell inner membrane. In terms of biological role, part of the ABC transporter complex LolCDE involved in the translocation of mature outer membrane-directed lipoproteins, from the inner membrane to the periplasmic chaperone, LolA. Responsible for the formation of the LolA-lipoprotein complex in an ATP-dependent manner. The chain is Lipoprotein-releasing system ATP-binding protein LolD from Cereibacter sphaeroides (strain ATCC 17023 / DSM 158 / JCM 6121 / CCUG 31486 / LMG 2827 / NBRC 12203 / NCIMB 8253 / ATH 2.4.1.) (Rhodobacter sphaeroides).